Here is a 560-residue protein sequence, read N- to C-terminus: Probable methionine--tRNA ligase, cytoplasmic (560 aa).

Residues 16 to 26 (PYVNNQPHLGN) carry the 'HIGH' region motif. Positions 347–351 (KFSKS) match the 'KMSKS' region motif. ATP is bound at residue K350.

This sequence belongs to the class-I aminoacyl-tRNA synthetase family.

It localises to the cytoplasm. It catalyses the reaction tRNA(Met) + L-methionine + ATP = L-methionyl-tRNA(Met) + AMP + diphosphate. The sequence is that of Probable methionine--tRNA ligase, cytoplasmic from Vairimorpha ceranae (strain BRL01) (Microsporidian parasite).